Here is a 231-residue protein sequence, read N- to C-terminus: MQQISLYAKISNSQLKICLHALASLTGMDPITILQHTMVWAPAQKYTPKILPGQGGQLDQYRIHVTNDNKNEDKEKIISYVQSKDSKEDIHNLANRQWHFQIMEMPEAGKQKTTSQSISSWSVKKGDSFQFLQSLAYKFQYEYWQKGFQFVYGNAVIQLTRIHILDQTTKNIKLLDPSKQWLVKVYIDVGHLTDIEALNKAVKELEKVKTELHGLMNLEIPDRNAFDTRIR.

Residues 191 to 218 (HLTDIEALNKAVKELEKVKTELHGLMNL) adopt a coiled-coil conformation.

It belongs to the Mediator complex subunit 18 family. Component of the Mediator complex.

The protein resides in the nucleus. Functionally, component of the Mediator complex, a coactivator involved in the regulated transcription of nearly all RNA polymerase II-dependent genes. Mediator functions as a bridge to convey information from gene-specific regulatory proteins to the basal RNA polymerase II transcription machinery. Mediator is recruited to promoters by direct interactions with regulatory proteins and serves as a scaffold for the assembly of a functional preinitiation complex with RNA polymerase II and the general transcription factors. This is Mediator of RNA polymerase II transcription subunit 18 (SRB5) from Yarrowia lipolytica (strain CLIB 122 / E 150) (Yeast).